Reading from the N-terminus, the 198-residue chain is NAD(P)H dehydrogenase (quinone) (198 aa).

The Flavodoxin-like domain maps to 4 to 189 (ILVLYYSMYG…AIARYQGEHV (186 aa)). FMN is bound by residues 10–15 (SMYGHI) and 78–80 (TRF). NAD(+) is bound at residue Tyr12. Trp98 contacts substrate. FMN-binding positions include 113–118 (STGTGG) and His133.

This sequence belongs to the WrbA family. The cofactor is FMN.

The enzyme catalyses a quinone + NADH + H(+) = a quinol + NAD(+). The catalysed reaction is a quinone + NADPH + H(+) = a quinol + NADP(+). This is NAD(P)H dehydrogenase (quinone) from Klebsiella pneumoniae (strain 342).